A 415-amino-acid polypeptide reads, in one-letter code: GPI mannosyltransferase 1 (415 aa).

9 helical membrane passes run 8–28 (PSLVFGAAIVLRAILLVYGAW), 82–102 (FFSFGKVLFALSDVVAGWLIA), 134–154 (TRGSSEGLLCVLVIALLWAVL), 158–178 (ITLAGVLLGLSVHFKIYPFVY), 222–242 (LLLTTTALATFSGLNISMYIL), 284–304 (FESLAFIPQLLLSVVVIPIVL), 329–349 (SQYFLWYLIFLPFYLPSSSLM), 354–374 (LGITVTALWVIAQALWLQQGY), and 387–407 (GLFLASLGFFAVNIWILGIII).

It belongs to the PIGM family.

The protein resides in the endoplasmic reticulum membrane. It functions in the pathway glycolipid biosynthesis; glycosylphosphatidylinositol-anchor biosynthesis. Functionally, mannosyltransferase involved in glycosylphosphatidylinositol-anchor biosynthesis. Transfers the first alpha-1,4-mannose to GlcN-acyl-PI during GPI precursor assembly. Required for cell wall integrity. The sequence is that of GPI mannosyltransferase 1 (gpi14) from Aspergillus oryzae (strain ATCC 42149 / RIB 40) (Yellow koji mold).